We begin with the raw amino-acid sequence, 99 residues long: Putative membrane protein insertion efficiency factor (99 aa).

The protein belongs to the UPF0161 family.

The protein resides in the cell membrane. Could be involved in insertion of integral membrane proteins into the membrane. The chain is Putative membrane protein insertion efficiency factor from Levilactobacillus brevis (strain ATCC 367 / BCRC 12310 / CIP 105137 / JCM 1170 / LMG 11437 / NCIMB 947 / NCTC 947) (Lactobacillus brevis).